Consider the following 812-residue polypeptide: Toll-like receptor 10 (812 aa).

The signal sequence occupies residues 1–19 (MRYIRSIYIFCSIVTSVRS). The Extracellular segment spans residues 20–577 (GASELPEERE…VHLPEISCNT (558 aa)). LRR repeat units follow at residues 24-46 (LPEERELTTNFSSMSLTKVPEGL), 49-70 (ITTTLDLSYNLLFQLQHSDFRS), 73-94 (KLKVLILCHNRIQELDIKTFEF), 97-118 (ELSYLDVSNNRLKSVTWFSLAG), and 119-139 (LRHLDLSFNDFDTLPISVETG). A glycan (N-linked (GlcNAc...) asparagine) is linked at Asn33. N-linked (GlcNAc...) asparagine glycosylation is present at Asn140. The stretch at 143 to 166 (HLETLGLSGAKIQKSDFQKIAHLQ) is one LRR 6 repeat. An N-linked (GlcNAc...) asparagine glycan is attached at Asn189. 4 LRR repeats span residues 296–321 (SNTVMRTIKLEHVHFRIFNIPQESIY), 325–348 (TKMDIENLTISDAQMPHMLFPMYP), 350–373 (RFQYLNFANNILTDDVFKKSIQLP), and 374–395 (HLKTLILKDNKLETLSLVSHFA). N-linked (GlcNAc...) asparagine glycosylation occurs at Asn331. Residue Asn397 is glycosylated (N-linked (GlcNAc...) asparagine). LRR repeat units follow at residues 399–420 (SLRHLDLSENLLQHENDENCLW), 423–443 (TLVTMNLSFNKFADSVFGCLP), 445–467 (NIQILDLNSNKIQTVPKAITHLT), 468–489 (SLRELNLAFNFLTDLPGCSHFR), and 490–510 (RLLVLNVEMNLILSSSLDFFQ). Asn428 is a glycosylation site (N-linked (GlcNAc...) asparagine). The LRRCT domain maps to 523–577 (NPFRCTCELRDFIQLGKYSEGMMVGWSDSYICEYPLNLKGTQLKDVHLPEISCNT). The chain crosses the membrane as a helical span at residues 578–598 (GLLIVTIVVVMLVLGMAVAFC). Residues 599–812 (CLHFDLPWYL…AISLIRTDCL (214 aa)) are Cytoplasmic-facing. Positions 633-776 (VQFHVFISYS…LFWANLRAAL (144 aa)) constitute a TIR domain.

It belongs to the Toll-like receptor family. In terms of assembly, binds MYD88 via their respective TIR domains.

It is found in the membrane. Functionally, participates in the innate immune response to microbial agents. Acts via MYD88 and TRAF6, leading to NF-kappa-B activation, cytokine secretion and the inflammatory response. This is Toll-like receptor 10 (TLR10) from Bos taurus (Bovine).